Consider the following 162-residue polypeptide: MADPSFDIVSKVDAQEIDNAVNQTVKEIRTRFDFRDTGASATLSGESILLVANTDERVKAVLDVLQEKFVKRGISLKALTFDEPKPSGKEFRLPVTVQQGIAEDKAKAIAKKIRTDGPKGVQAQIQGDQLRVTGKKRDDLQRVIQILKTEDFEVPLQFVNYR.

Belongs to the YajQ family.

Its function is as follows. Nucleotide-binding protein. The chain is Nucleotide-binding protein Francci3_0558 from Frankia casuarinae (strain DSM 45818 / CECT 9043 / HFP020203 / CcI3).